Reading from the N-terminus, the 105-residue chain is Putative pterin-4-alpha-carbinolamine dehydratase (105 aa).

This sequence belongs to the pterin-4-alpha-carbinolamine dehydratase family.

The catalysed reaction is (4aS,6R)-4a-hydroxy-L-erythro-5,6,7,8-tetrahydrobiopterin = (6R)-L-erythro-6,7-dihydrobiopterin + H2O. This Sinorhizobium medicae (strain WSM419) (Ensifer medicae) protein is Putative pterin-4-alpha-carbinolamine dehydratase.